The chain runs to 140 residues: Protein SamA (140 aa).

Active-site for autocatalytic cleavage activity residues include Ser61 and Lys98.

The protein belongs to the peptidase S24 family.

Its function is as follows. Involved in UV protection and mutation. The chain is Protein SamA (samA) from Salmonella typhimurium (strain LT2 / SGSC1412 / ATCC 700720).